The primary structure comprises 253 residues: ATP synthase subunit a (253 aa).

Helical transmembrane passes span 30-50 (FTNA…VLLA), 88-108 (FFPF…IGLV), 118-138 (IAVT…YGLI), 144-164 (FLGI…MIMI), 184-204 (MLAG…LLGA), and 211-231 (VAPL…LVAF).

The protein belongs to the ATPase A chain family. F-type ATPases have 2 components, CF(1) - the catalytic core - and CF(0) - the membrane proton channel. CF(1) has five subunits: alpha(3), beta(3), gamma(1), delta(1), epsilon(1). CF(0) has three main subunits: a(1), b(2) and c(9-12). The alpha and beta chains form an alternating ring which encloses part of the gamma chain. CF(1) is attached to CF(0) by a central stalk formed by the gamma and epsilon chains, while a peripheral stalk is formed by the delta and b chains.

It localises to the cell inner membrane. Its function is as follows. Key component of the proton channel; it plays a direct role in the translocation of protons across the membrane. This Beijerinckia indica subsp. indica (strain ATCC 9039 / DSM 1715 / NCIMB 8712) protein is ATP synthase subunit a.